The chain runs to 114 residues: DNA-binding protein rrnAC3180 (114 aa).

The segment covering 1-11 has biased composition (acidic residues); sequence MSGDPSEEELE. The disordered stretch occupies residues 1–45; the sequence is MSGDPSEEELEELRKKKMEQLKEQQGGEGEGQEAAQQQAEAQKQA. Residues 12 to 22 are compositionally biased toward basic and acidic residues; that stretch reads ELRKKKMEQLK. Low complexity predominate over residues 32-45; the sequence is QEAAQQQAEAQKQA.

Belongs to the PDCD5 family.

The protein is DNA-binding protein rrnAC3180 of Haloarcula marismortui (strain ATCC 43049 / DSM 3752 / JCM 8966 / VKM B-1809) (Halobacterium marismortui).